A 345-amino-acid chain; its full sequence is Cell division control protein 2 homolog 2 (345 aa).

The segment at 1 to 44 (MQVQVQEGQTACDGSLRPLPSAGPASFVPRSLRPAPLRGTSTPD) is disordered. The Protein kinase domain occupies 46 to 328 (YSRIEKVGEG…AYEALQHSYF (283 aa)). ATP-binding positions include 52–60 (VGEGSYGIV) and Lys-75. A Phosphoserine modification is found at Ser-56. At Tyr-57 the chain carries Phosphotyrosine. The active-site Proton acceptor is Asp-168.

Belongs to the protein kinase superfamily. CMGC Ser/Thr protein kinase family. CDC2/CDKX subfamily. As to quaternary structure, forms a stable but non-covalent complex with a regulatory subunit and with a cyclin.

The catalysed reaction is L-seryl-[protein] + ATP = O-phospho-L-seryl-[protein] + ADP + H(+). The enzyme catalyses L-threonyl-[protein] + ATP = O-phospho-L-threonyl-[protein] + ADP + H(+). Its activity is regulated as follows. Phosphorylation at Ser-56 or Tyr-57 inactivates the enzyme. In terms of biological role, probably involved in the control of the cell cycle. In Trypanosoma brucei brucei, this protein is Cell division control protein 2 homolog 2 (CRK2).